A 29-amino-acid polypeptide reads, in one-letter code: Small ribosomal subunit protein uS7 (29 aa).

Residues 1 to 29 form a disordered region; the sequence is ELIGAANRDTKSFSINRKDAKERVAKAAR. The segment covering 8–29 has biased composition (basic and acidic residues); sequence RDTKSFSINRKDAKERVAKAAR.

Belongs to the universal ribosomal protein uS7 family. As to quaternary structure, part of the 30S ribosomal subunit.

Its function is as follows. One of the primary rRNA binding proteins, it binds directly to 16S rRNA where it nucleates assembly of the head domain of the 30S subunit. Is located at the subunit interface close to the decoding center. The protein is Small ribosomal subunit protein uS7 (rps7) of Methanosarcina thermophila.